The following is a 56-amino-acid chain: Small ribosomal subunit protein uS14 (56 aa).

Zn(2+)-binding residues include Cys-21, Cys-24, Cys-39, and Cys-42.

It belongs to the universal ribosomal protein uS14 family. Zinc-binding uS14 subfamily. Part of the 30S ribosomal subunit. Zn(2+) is required as a cofactor.

Binds 16S rRNA, required for the assembly of 30S particles. The protein is Small ribosomal subunit protein uS14 of Pyrococcus furiosus (strain ATCC 43587 / DSM 3638 / JCM 8422 / Vc1).